A 290-amino-acid chain; its full sequence is ATP synthase gamma chain (290 aa).

This sequence belongs to the ATPase gamma chain family. In terms of assembly, F-type ATPases have 2 components, CF(1) - the catalytic core - and CF(0) - the membrane proton channel. CF(1) has five subunits: alpha(3), beta(3), gamma(1), delta(1), epsilon(1). CF(0) has three main subunits: a, b and c.

The protein localises to the cell inner membrane. Its function is as follows. Produces ATP from ADP in the presence of a proton gradient across the membrane. The gamma chain is believed to be important in regulating ATPase activity and the flow of protons through the CF(0) complex. The sequence is that of ATP synthase gamma chain from Delftia acidovorans (strain DSM 14801 / SPH-1).